Here is a 219-residue protein sequence, read N- to C-terminus: 2-C-methyl-D-erythritol 4-phosphate cytidylyltransferase (219 aa).

The protein belongs to the IspD/TarI cytidylyltransferase family. IspD subfamily.

The enzyme catalyses 2-C-methyl-D-erythritol 4-phosphate + CTP + H(+) = 4-CDP-2-C-methyl-D-erythritol + diphosphate. It participates in isoprenoid biosynthesis; isopentenyl diphosphate biosynthesis via DXP pathway; isopentenyl diphosphate from 1-deoxy-D-xylulose 5-phosphate: step 2/6. Its function is as follows. Catalyzes the formation of 4-diphosphocytidyl-2-C-methyl-D-erythritol from CTP and 2-C-methyl-D-erythritol 4-phosphate (MEP). The polypeptide is 2-C-methyl-D-erythritol 4-phosphate cytidylyltransferase (Phocaeicola vulgatus (strain ATCC 8482 / DSM 1447 / JCM 5826 / CCUG 4940 / NBRC 14291 / NCTC 11154) (Bacteroides vulgatus)).